We begin with the raw amino-acid sequence, 156 residues long: Anaerobic nitrite reductase HB2 (156 aa).

Residues 2 to 151 (GFTDKQEALV…LASAIKAEMH (150 aa)) form the Globin domain. The Homodimerization motif lies at 35–39 (EIAPV). Residues S45, K59, H63, and H98 each contribute to the heme b site. The short motif at 105-117 (DPHFEVVKEALLR) is the Homodimerization element.

Belongs to the plant globin family. Homodimer. It depends on heme b as a cofactor.

It localises to the cytoplasm. The protein resides in the nucleus. The catalysed reaction is Fe(III)-heme b-[protein] + nitric oxide + H2O = Fe(II)-heme b-[protein] + nitrite + 2 H(+). Phytoglobin that reduces nitrite to nitric oxide (NO) under anoxic conditions (e.g. during flooding or in waterlogged soil). May not function as an oxygen storage or transport protein. Has an unusually high affinity for O(2) through an hexacoordinate heme iron because of a very low dissociation constant. This chain is Anaerobic nitrite reductase HB2, found in Solanum lycopersicum (Tomato).